Reading from the N-terminus, the 184-residue chain is Oligoribonuclease (184 aa).

An Exonuclease domain is found at leucine 10–leucine 172. Tyrosine 129 is an active-site residue.

This sequence belongs to the oligoribonuclease family.

Its subcellular location is the cytoplasm. Its function is as follows. 3'-to-5' exoribonuclease specific for small oligoribonucleotides. This is Oligoribonuclease from Tropheryma whipplei (strain Twist) (Whipple's bacillus).